A 144-amino-acid chain; its full sequence is Deoxyuridine 5'-triphosphate nucleotidohydrolase (144 aa).

Substrate-binding positions include 63–65 (RSG), asparagine 76, and 80–82 (TVD).

Belongs to the dUTPase family. Requires Mg(2+) as cofactor.

The enzyme catalyses dUTP + H2O = dUMP + diphosphate + H(+). It functions in the pathway pyrimidine metabolism; dUMP biosynthesis; dUMP from dCTP (dUTP route): step 2/2. In terms of biological role, this enzyme is involved in nucleotide metabolism: it produces dUMP, the immediate precursor of thymidine nucleotides and it decreases the intracellular concentration of dUTP so that uracil cannot be incorporated into DNA. In Treponema denticola (strain ATCC 35405 / DSM 14222 / CIP 103919 / JCM 8153 / KCTC 15104), this protein is Deoxyuridine 5'-triphosphate nucleotidohydrolase.